Consider the following 765-residue polypeptide: Endosialin (765 aa).

The signal sequence occupies residues 1-17; sequence MLLRLLLAWVAAVPALG. At 18–695 the chain is on the extracellular side; that stretch reads QVPWTPEPRA…GQSQRDDRWL (678 aa). Residues 30-156 enclose the C-type lectin domain; that stretch reads GPSSCYALFP…CTLAVDGYLC (127 aa). Intrachain disulfides connect Cys131-Cys147, Cys164-Cys213, Cys203-Cys230, Cys316-Cys326, Cys322-Cys335, and Cys337-Cys350. In terms of domain architecture, Sushi spans 162 to 232; it reads GACPALPLEV…WSQTGPLCPG (71 aa). The 40-residue stretch at 312–351 folds into the EGF-like; calcium-binding domain; that stretch reads DTDECQIAGVCQQMCVNYVGGFECYCSEGHELEADGISCS. O-linked (GalNAc...) threonine glycans are attached at residues Thr401, Thr428, Thr448, Thr456, Thr459, and Thr466. 2 O-linked (GalNAc...) serine glycosylation sites follow: Ser467 and Ser470. O-linked (GalNAc...) threonine glycosylation is present at Thr472. Ser477 is a glycosylation site (O-linked (GalNAc...) serine). Thr488, Thr517, Thr520, Thr535, Thr552, Thr554, Thr556, Thr570, Thr571, Thr604, and Thr613 each carry an O-linked (GalNAc...) threonine glycan. The disordered stretch occupies residues 548 to 675; it reads MSPDTHTITY…QLPSVPSTAA (128 aa). Residues 622-633 show a composition bias toward pro residues; the sequence is PAFPSSPLPPQR. 2 O-linked (GalNAc...) serine glycosylation sites follow: Ser626 and Ser627. Residues Thr635 and Thr638 are each glycosylated (O-linked (GalNAc...) threonine). Residues 635–647 show a composition bias toward polar residues; sequence TNQTSSISPTHSY. O-linked (GalNAc...) serine glycans are attached at residues Ser639 and Ser640. A glycan (O-linked (GalNAc...) threonine) is linked at Thr644. Residue Ser663 is glycosylated (O-linked (GalNAc...) serine). An O-linked (GalNAc...) threonine glycan is attached at Thr673. A helical membrane pass occupies residues 696-716; that stretch reads LVALLVPTCVFLVVLLALGIV. Over 717–765 the chain is Cytoplasmic; the sequence is YCTRCGSHAPNKRITDCYRWVTHAGNKSSTEPMPPRGSLTGVQTCRTSV. Ser754 bears the Phosphoserine mark.

As to quaternary structure, interacts with PDGFRA; this interaction promotes PDGF receptor signaling pathway. Interacts with integrin beta-1/ITGB1. Interacts with insulin receptor/INSR; this interaction diminishes INSR autophosphorylation. Post-translationally, O-glycosylated by sialylated oligosaccharides. In terms of processing, may be N-glycosylated. As to expression, expressed in cell lines derived from endothelial cells, embryonic fibroblasts and preadipocytes. Expressed in skeletal muscle by a subset of pericytes.

The protein resides in the membrane. Functionally, cell surface glycoprotein involved in various biological processes including angiogenesis, immune response modulation, and tissue remodeling and repair. Participates in pericyte proliferation through positive modulation of the PDGF receptor signaling pathway. Acts as a scaffold for factor X, triggering allosteric changes and the spatial re-alignment of factor X with the TF-factor VIIa complex, thereby enhancing coagulation activation. Modulates the insulin signaling pathway by interacting with insulin receptor/INSR and by diminishing its capacity to be autophosphorylated in response to insulin. Also regulates LPS-induced inflammatory responses in macrophages by favoring production of proinflammatory cytokines. The sequence is that of Endosialin (Cd248) from Mus musculus (Mouse).